A 570-amino-acid chain; its full sequence is Phytoene desaturase (570 aa).

A helical transmembrane segment spans residues 547 to 567 (LFQGFLGALVAILLAYYYLVI).

Belongs to the carotenoid/retinoid oxidoreductase family. Requires NAD(+) as cofactor.

The protein resides in the membrane. The enzyme catalyses 15-cis-phytoene + A = all-trans-phytofluene + AH2. It catalyses the reaction all-trans-phytofluene + A = all-trans-zeta-carotene + AH2. It carries out the reaction all-trans-zeta-carotene + A = all-trans-neurosporene + AH2. The catalysed reaction is all-trans-neurosporene + A = all-trans-lycopene + AH2. Its pathway is carotenoid biosynthesis. Functionally, phytoene desaturase; part of the car gene cluster that mediates the biosynthesis of neurosporaxanthin, a carboxylic apocarotenoid acting as an essential protective pigments and leading to orange pigmentation. Converts phytoene into lycopene via the intermediates phytofluene, zeta-carotene and neurosporene; and further desaturates gamma-carotene into torulene. Neurosporaxanthin is synthesized from geranyl-geranyl pyrophosphate (GGPP) through several enzymatic activities. Phytoene synthase activity performed by the bifunctional enzyme carAR first produces phytoene from geranyl-geranyl pyrophosphate (GGPP). The phytoene dehydrogenase carB then introduces 4 desaturations to lead to lycopene which is substrate of the carotene cyclase activity of carAR that leads to the production of gamma-carotene. CarB then performs a 5th desaturation reaction to yield torulene. Torulene is the substrate of the dioxidase carT that breaks the molecule, removing five carbon atoms to yield beta-apo-4'-carotenal, whereas the aldehyde dehydrogenase carD mediates the last step by converting beta-apo-4'-carotenal into neurosporaxanthin. The chain is Phytoene desaturase from Fusarium fujikuroi (Bakanae and foot rot disease fungus).